The sequence spans 546 residues: MFS-type transporter patC (546 aa).

Over residues 1 to 15 (MSIDASPSESVLESQ) the composition is skewed to polar residues. A disordered region spans residues 1 to 29 (MSIDASPSESVLESQTPDRVDESIPIKAE). Residues 16 to 29 (TPDRVDESIPIKAE) show a composition bias toward basic and acidic residues. 14 helical membrane-spanning segments follow: residues 41–61 (IVGF…LLYG), 89–109 (VGFT…YAIF), 113–133 (WLFL…GAAP), 143–163 (VWAG…ITIL), 171–191 (VYVG…PIIG), 203–223 (WSFY…VFLL), 245–265 (WVGT…IVFG), 277–297 (IALY…QYFC), 318–338 (LLLY…VYYI), 350–370 (GIMS…TILL), 379–399 (GYFI…AVLM), 416–436 (ILMG…PAIV), 447–467 (FMNI…SAIF), and 515–535 (VIVS…ALYV).

Belongs to the major facilitator superfamily. TCR/Tet family.

The protein resides in the vacuole membrane. It is found in the cell membrane. In terms of biological role, MFS-type transporter; part of the gene cluster that mediates the biosynthesis of patulin, an acetate-derived tetraketide mycotoxin produced by several fungal species that shows antimicrobial properties against several bacteria. May be involved in the secretion of E-ascladiol to be converted to patulin by the secreted patulin synthase patE. This chain is MFS-type transporter patC, found in Penicillium expansum (Blue mold rot fungus).